The sequence spans 454 residues: Guanine deaminase (454 aa).

Residues histidine 82 and histidine 84 each contribute to the Zn(2+) site. Substrate is bound by residues 84–87 (HASQ), 213–214 (RF), 240–243 (HISE), and aspartate 330. Histidine 240 and aspartate 330 together coordinate Zn(2+). A Phosphoserine modification is found at serine 453.

Belongs to the metallo-dependent hydrolases superfamily. ATZ/TRZ family. In terms of assembly, homodimer. The cofactor is Zn(2+).

It catalyses the reaction guanine + H2O + H(+) = xanthine + NH4(+). The protein operates within purine metabolism; guanine degradation; xanthine from guanine: step 1/1. Its function is as follows. Catalyzes the hydrolytic deamination of guanine, producing xanthine and ammonia. The sequence is that of Guanine deaminase from Homo sapiens (Human).